The chain runs to 210 residues: Protein GrpE (210 aa).

A disordered region spans residues 1-31 (MAKDPQTPTDEELARAERDAEPQPGDATDDE). Residues 12–21 (ELARAERDAE) are compositionally biased toward basic and acidic residues.

It belongs to the GrpE family. In terms of assembly, homodimer.

Its subcellular location is the cytoplasm. In terms of biological role, participates actively in the response to hyperosmotic and heat shock by preventing the aggregation of stress-denatured proteins, in association with DnaK and GrpE. It is the nucleotide exchange factor for DnaK and may function as a thermosensor. Unfolded proteins bind initially to DnaJ; upon interaction with the DnaJ-bound protein, DnaK hydrolyzes its bound ATP, resulting in the formation of a stable complex. GrpE releases ADP from DnaK; ATP binding to DnaK triggers the release of the substrate protein, thus completing the reaction cycle. Several rounds of ATP-dependent interactions between DnaJ, DnaK and GrpE are required for fully efficient folding. This is Protein GrpE from Chromohalobacter salexigens (strain ATCC BAA-138 / DSM 3043 / CIP 106854 / NCIMB 13768 / 1H11).